We begin with the raw amino-acid sequence, 408 residues long: DNA-directed RNA polymerase subunit Rpo1C (408 aa).

The protein belongs to the RNA polymerase beta' chain family. As to quaternary structure, part of the RNA polymerase complex.

The protein resides in the cytoplasm. The enzyme catalyses RNA(n) + a ribonucleoside 5'-triphosphate = RNA(n+1) + diphosphate. In terms of biological role, DNA-dependent RNA polymerase (RNAP) catalyzes the transcription of DNA into RNA using the four ribonucleoside triphosphates as substrates. Forms part of the jaw domain. The chain is DNA-directed RNA polymerase subunit Rpo1C from Methanosarcina mazei (strain ATCC BAA-159 / DSM 3647 / Goe1 / Go1 / JCM 11833 / OCM 88) (Methanosarcina frisia).